We begin with the raw amino-acid sequence, 203 residues long: UPF0637 protein SERP0693 (203 aa).

This sequence belongs to the UPF0637 family.

The polypeptide is UPF0637 protein SERP0693 (Staphylococcus epidermidis (strain ATCC 35984 / DSM 28319 / BCRC 17069 / CCUG 31568 / BM 3577 / RP62A)).